Consider the following 131-residue polypeptide: UPF0146 protein PH0209 (131 aa).

It belongs to the UPF0146 family.

This chain is UPF0146 protein PH0209, found in Pyrococcus horikoshii (strain ATCC 700860 / DSM 12428 / JCM 9974 / NBRC 100139 / OT-3).